The following is a 58-amino-acid chain: MATVKVTLVKSLNGRLANHKACVKGLGLRRINHTVEVQDTPENRGMINKAYYLLRVEG.

This sequence belongs to the universal ribosomal protein uL30 family. As to quaternary structure, part of the 50S ribosomal subunit.

The protein is Large ribosomal subunit protein uL30 of Pseudomonas aeruginosa (strain LESB58).